A 1350-amino-acid polypeptide reads, in one-letter code: Nidogen (1350 aa).

Residues 1-22 (MPTFGSKLLACLLLSSVILVSG) form the signal peptide. In terms of domain architecture, NIDO spans 107–260 (AFYSNVDTSF…GVWLFEVAPI (154 aa)). Asn231 is a glycosylation site (N-linked (GlcNAc...) asparagine). In terms of domain architecture, EGF-like 1 spans 281-321 (LALSCQAHAHQCHEKAECHDKAEGYCCVCGSGFYGNGKSCL). Intrachain disulfides connect Cys285-Cys298, Cys292-Cys307, and Cys309-Cys320. The Nidogen G2 beta-barrel domain occupies 325–550 (QPIRVTGTLT…GVTPESNACN (226 aa)). 2 N-linked (GlcNAc...) asparagine glycosylation sites follow: Asn423 and Asn480. One can recognise an EGF-like 2 domain in the interval 545 to 583 (ESNACNDGTADCVENSVCVPYEDTYRCDCYHGFAAQLDE). Disulfide bonds link Cys549–Cys562, Cys556–Cys571, Cys595–Cys608, Cys602–Cys617, and Cys619–Cys630. An EGF-like 3; calcium-binding domain is found at 591 to 631 (DIDECATGSHVCDENAVCDNTEGGFNCYCTEGFEGNGYRCL). A glycan (N-linked (GlcNAc...) asparagine) is linked at Asn633. The segment at 645–691 (VEGQAEPTSEPSPNPSPYPDQGQDQEREREDDQYPQPNPYPYPEEQI) is disordered. EGF-like domains follow at residues 788-829 (DLIP…YNCD), 832-874 (SDDS…FNCQ), 912-953 (PAGR…TGCT), 955-996 (KPLS…YVCI), and 997-1037 (EEQN…SLCQ). Cystine bridges form between Cys792-Cys804, Cys798-Cys815, Cys817-Cys828, Cys836-Cys849, Cys843-Cys860, Cys862-Cys873, Cys916-Cys927, Cys921-Cys938, Cys940-Cys952, Cys959-Cys971, Cys965-Cys982, Cys984-Cys995, Cys1001-Cys1014, Cys1008-Cys1023, and Cys1025-Cys1036. Asn801 carries an N-linked (GlcNAc...) asparagine glycan. Residue Asn1032 is glycosylated (N-linked (GlcNAc...) asparagine). 4 LDL-receptor class B repeats span residues 1084–1126 (GRVY…DVIS), 1127–1170 (RRLY…DPYR), 1171–1216 (EKLF…LENS), and 1257–1282 (DQFY…QTPI).

Expressed in the basement membrane around the follicular epithelium of the adult ovary (at protein level).

It localises to the secreted. It is found in the extracellular space. Its subcellular location is the extracellular matrix. The protein resides in the basement membrane. Functionally, cell adhesion glycoprotein which is widely distributed in basement membranes. Involved in cell-extracellular matrix (ECM) interactions probably by connecting the laminin and collagen IV networks. Required for permeability and mechanical stability of basement membranes, and ECM dependent neural plasticity. Not involved in assembly of the embryonic basement membrane. This is Nidogen from Drosophila melanogaster (Fruit fly).